The sequence spans 102 residues: Protein GOLVEN 4 (102 aa).

The N-terminal stretch at 1–27 (MEMKKWSYANLITLALLFLFFIILLLA) is a signal peptide. Positions 28 to 89 (FQGGSRDDDH…QEREVYVELR (62 aa)) are excised as a propeptide. Positions 56-78 (KSLKPINPTKKNGFEYPDQGSHD) are disordered. Position 91 is a sulfotyrosine (Tyr91). At Pro99 the chain carries Hydroxyproline.

The protein belongs to the RGF family. Binds to LRR receptor-like serine/threonine-protein kinases to trigger their dimerization with SERK proteins and subsequent signaling. Expressed in roots and sepals.

The protein localises to the secreted. Signaling peptide (root growth factor) that promotes root hairs formation and growth. Maintains the postembryonic root stem cell niche. Regulates the pattern of root growth and lateral root development by modulating the length and the number of cortical cells in the root apical meristem (RAM), and the anticlinal asymmetric cell divisions in lateral root initiation cells. The polypeptide is Protein GOLVEN 4 (Arabidopsis thaliana (Mouse-ear cress)).